The chain runs to 133 residues: uncharacterized protein (133 aa).

Residues 1-22 form the signal peptide; sequence MYRSSISIQVFICVLFLPLDSG. Residue Asn-111 is glycosylated (N-linked (GlcNAc...) asparagine).

The protein localises to the secreted. This is an uncharacterized protein from Saccharomyces cerevisiae (strain ATCC 204508 / S288c) (Baker's yeast).